A 141-amino-acid chain; its full sequence is Methane monooxygenase regulatory protein B (141 aa).

The protein belongs to the TmoD/XamoD family. The soluble methane monooxygenase (sMMO) consists of four components A/MMOH (composed of alpha/MmoX, beta/MmoY and gamma/MmoZ), B/MMOB (MmoB), C/MMOR (MmoC) and D/MMOD (MmoD).

In terms of biological role, the B protein acts as a regulator of electron flow through the soluble mmo complex, switching the enzyme from an oxidase to a hydroxylase in the presence of the substrate. This Methylococcus capsulatus (strain ATCC 33009 / NCIMB 11132 / Bath) protein is Methane monooxygenase regulatory protein B (mmoB).